The chain runs to 484 residues: UDP-N-acetylmuramate--L-alanine ligase (484 aa).

Residue 126 to 132 coordinates ATP; that stretch reads GTHGKTT.

It belongs to the MurCDEF family.

The protein resides in the cytoplasm. It catalyses the reaction UDP-N-acetyl-alpha-D-muramate + L-alanine + ATP = UDP-N-acetyl-alpha-D-muramoyl-L-alanine + ADP + phosphate + H(+). It functions in the pathway cell wall biogenesis; peptidoglycan biosynthesis. Functionally, cell wall formation. The polypeptide is UDP-N-acetylmuramate--L-alanine ligase (Aeromonas hydrophila subsp. hydrophila (strain ATCC 7966 / DSM 30187 / BCRC 13018 / CCUG 14551 / JCM 1027 / KCTC 2358 / NCIMB 9240 / NCTC 8049)).